A 349-amino-acid chain; its full sequence is tRNA pseudouridine synthase D (349 aa).

F27 provides a ligand contact to substrate. Catalysis depends on D80, which acts as the Nucleophile. N129 contributes to the substrate binding site. A TRUD domain is found at G155 to L303. F329 contributes to the substrate binding site.

This sequence belongs to the pseudouridine synthase TruD family.

It carries out the reaction uridine(13) in tRNA = pseudouridine(13) in tRNA. In terms of biological role, responsible for synthesis of pseudouridine from uracil-13 in transfer RNAs. In Cronobacter sakazakii (strain ATCC BAA-894) (Enterobacter sakazakii), this protein is tRNA pseudouridine synthase D.